A 591-amino-acid polypeptide reads, in one-letter code: Aspartate--tRNA(Asp/Asn) ligase (591 aa).

Glu176 is a binding site for L-aspartate. An aspartate region spans residues Gln200–Lys203. L-aspartate is bound at residue Arg222. ATP-binding positions include Arg222–Glu224 and Gln231. His450 provides a ligand contact to L-aspartate. ATP is bound at residue Glu484. Arg491 serves as a coordination point for L-aspartate. Residue Gly536 to Arg539 participates in ATP binding.

The protein belongs to the class-II aminoacyl-tRNA synthetase family. Type 1 subfamily. Homodimer.

The protein localises to the cytoplasm. The catalysed reaction is tRNA(Asx) + L-aspartate + ATP = L-aspartyl-tRNA(Asx) + AMP + diphosphate. Aspartyl-tRNA synthetase with relaxed tRNA specificity since it is able to aspartylate not only its cognate tRNA(Asp) but also tRNA(Asn). Reaction proceeds in two steps: L-aspartate is first activated by ATP to form Asp-AMP and then transferred to the acceptor end of tRNA(Asp/Asn). This chain is Aspartate--tRNA(Asp/Asn) ligase, found in Bacillus cereus (strain B4264).